Here is a 375-residue protein sequence, read N- to C-terminus: D-aspartate oxidase (375 aa).

An N-terminal signal peptide occupies residues 1–17 (MATVCVVGSGILGLAVA). The FAD site is built by serine 9, leucine 12, aspartate 34, serine 51, and glycine 55. Asparagine 203 is a glycosylation site (N-linked (GlcNAc...) asparagine). 3 residues coordinate FAD: arginine 322, glycine 354, and tyrosine 355.

This sequence belongs to the DAMOX/DASOX family. FAD serves as cofactor.

The enzyme catalyses D-aspartate + O2 + H2O = oxaloacetate + H2O2 + NH4(+). It catalyses the reaction D-glutamate + O2 + H2O = H2O2 + 2-oxoglutarate + NH4(+). In terms of biological role, selectively catalyzes the oxidative deamination of acidic amino acids. Protects the organism from the toxicity of D-amino acids. Enables the organism to utilize D-amino acids as a source of nutrients. Enables the organism to utilize D-aspartate as a nitrogen source. This Komagataella phaffii (strain GS115 / ATCC 20864) (Yeast) protein is D-aspartate oxidase (DDO).